Consider the following 429-residue polypeptide: Saccharopine dehydrogenase-like oxidoreductase (429 aa).

N-acetylalanine is present on Ala-2. Ser-217 bears the Phosphoserine mark.

Belongs to the saccharopine dehydrogenase family.

The chain is Saccharopine dehydrogenase-like oxidoreductase (SCCPDH) from Bos taurus (Bovine).